Here is a 152-residue protein sequence, read N- to C-terminus: CASP-like protein 5C3 (152 aa).

The Cytoplasmic segment spans residues Met-1–Arg-17. The helical transmembrane segment at Leu-18–Tyr-38 threads the bilayer. Residues Gln-39 to Ala-42 are Extracellular-facing. Residues Phe-43–Val-63 traverse the membrane as a helical segment. Residues Asp-64–Arg-78 are Cytoplasmic-facing. The chain crosses the membrane as a helical span at residues Ile-79 to Ser-99. Residues Ser-100 to Thr-128 are Extracellular-facing. A glycan (N-linked (GlcNAc...) asparagine) is linked at Asn-111. The helical transmembrane segment at Leu-129–Pro-149 threads the bilayer. Over Ser-150–Ile-152 the chain is Cytoplasmic.

This sequence belongs to the Casparian strip membrane proteins (CASP) family. In terms of assembly, homodimer and heterodimers. In terms of tissue distribution, expressed in the floral organ abscission zone and flower buds.

The protein resides in the cell membrane. This chain is CASP-like protein 5C3, found in Arabidopsis thaliana (Mouse-ear cress).